The chain runs to 228 residues: Cutinase CUT1 (228 aa).

The first 16 residues, 1–16, serve as a signal peptide directing secretion; it reads MQFITVALTLIALASA. Residues Cys-49 and Cys-127 are joined by a disulfide bond. Catalysis depends on Ser-138, which acts as the Nucleophile. A disulfide bridge connects residues Cys-189 and Cys-196. N-linked (GlcNAc...) asparagine glycosylation is present at Asn-190. Asp-193 is an active-site residue. His-206 functions as the Proton donor/acceptor in the catalytic mechanism.

It belongs to the cutinase family. In terms of processing, the 2 disulfide bonds play a critical role in holding the catalytic residues in juxta-position; reduction of the disulfide bridges results in the complete inactivation of the enzyme.

The protein resides in the secreted. It catalyses the reaction cutin + H2O = cutin monomers.. In terms of biological role, catalyzes the hydrolysis of complex carboxylic polyesters found in the cell wall of plants. Degrades cutin, a macromolecule that forms the structure of the plant cuticle. Required for efficient penetration of the host plant cuticle by the appressorium during the initial stage of fungal infection. This Pyricularia oryzae (strain 70-15 / ATCC MYA-4617 / FGSC 8958) (Rice blast fungus) protein is Cutinase CUT1.